A 140-amino-acid polypeptide reads, in one-letter code: Nucleoside diphosphate kinase (140 aa).

ATP is bound by residues Lys-11, Phe-59, Arg-87, Thr-93, Arg-104, and Asn-114. The Pros-phosphohistidine intermediate role is filled by His-117.

It belongs to the NDK family. In terms of assembly, homotetramer. The cofactor is Mg(2+).

Its subcellular location is the cytoplasm. The enzyme catalyses a 2'-deoxyribonucleoside 5'-diphosphate + ATP = a 2'-deoxyribonucleoside 5'-triphosphate + ADP. The catalysed reaction is a ribonucleoside 5'-diphosphate + ATP = a ribonucleoside 5'-triphosphate + ADP. Its function is as follows. Major role in the synthesis of nucleoside triphosphates other than ATP. The ATP gamma phosphate is transferred to the NDP beta phosphate via a ping-pong mechanism, using a phosphorylated active-site intermediate. The polypeptide is Nucleoside diphosphate kinase (Rhizobium meliloti (strain 1021) (Ensifer meliloti)).